The primary structure comprises 61 residues: Small ribosomal subunit protein uS14 (61 aa).

4 residues coordinate Zn(2+): Cys-24, Cys-27, Cys-40, and Cys-43.

Belongs to the universal ribosomal protein uS14 family. Zinc-binding uS14 subfamily. In terms of assembly, part of the 30S ribosomal subunit. Contacts proteins S3 and S10. Zn(2+) is required as a cofactor.

Functionally, binds 16S rRNA, required for the assembly of 30S particles and may also be responsible for determining the conformation of the 16S rRNA at the A site. The sequence is that of Small ribosomal subunit protein uS14 from Coprothermobacter proteolyticus (strain ATCC 35245 / DSM 5265 / OCM 4 / BT).